The chain runs to 423 residues: AP-1 complex subunit mu-2 (423 aa).

Residues 168–421 (KNEVFIDVIE…ITQSGDYQLR (254 aa)) enclose the MHD domain.

The protein belongs to the adaptor complexes medium subunit family. Adaptor protein complex 1 (AP-1) is a heterotetramer composed of two large adaptins (gamma-type subunit AP1G1 and beta-type subunit AP1B1), a medium adaptin (mu-type subunit AP1M1 or AP1M2) and a small adaptin (sigma-type subunit AP1S1 or AP1S2 or AP1S3). Interacts with P2X4. In terms of processing, phosphorylation of membrane-bound AP1M1/AP1M2 increases its affinity for sorting signals.

The protein resides in the golgi apparatus. It localises to the cytoplasmic vesicle. The protein localises to the clathrin-coated vesicle membrane. Subunit of clathrin-associated adaptor protein complex 1 that plays a role in protein sorting in the trans-Golgi network (TGN) and endosomes. The AP complexes mediate the recruitment of clathrin to membranes and the recognition of sorting signals within the cytosolic tails of transmembrane cargo molecules. This Homo sapiens (Human) protein is AP-1 complex subunit mu-2 (AP1M2).